The sequence spans 223 residues: ATP synthase subunit a 1 (223 aa).

Helical transmembrane passes span 20–40 (LTIATTWALMLVLVGGSAFAS), 78–98 (YLPYLGTLFIFIAFSNLCTII), 108–128 (LSTTAALAMSVFVAVPLFGIA), 174–194 (MILAILLTVTPFVFPVLMSVL), and 196–216 (LLTGMVQAYIFSILATVYISA).

This sequence belongs to the ATPase A chain family. In terms of assembly, F-type ATPases have 2 components, CF(1) - the catalytic core - and CF(0) - the membrane proton channel. CF(1) has five subunits: alpha(3), beta(3), gamma(1), delta(1), epsilon(1). CF(0) has four main subunits: a, b, b' and c.

The protein resides in the cell inner membrane. Functionally, key component of the proton channel; it plays a direct role in the translocation of protons across the membrane. This chain is ATP synthase subunit a 1, found in Chlorobium luteolum (strain DSM 273 / BCRC 81028 / 2530) (Pelodictyon luteolum).